Consider the following 193-residue polypeptide: ATP-dependent Clp protease proteolytic subunit 1 (193 aa).

The active-site Nucleophile is the Ser98. Residue His123 is part of the active site.

It belongs to the peptidase S14 family. Fourteen ClpP subunits assemble into 2 heptameric rings which stack back to back to give a disk-like structure with a central cavity, resembling the structure of eukaryotic proteasomes.

The protein localises to the cytoplasm. It catalyses the reaction Hydrolysis of proteins to small peptides in the presence of ATP and magnesium. alpha-casein is the usual test substrate. In the absence of ATP, only oligopeptides shorter than five residues are hydrolyzed (such as succinyl-Leu-Tyr-|-NHMec, and Leu-Tyr-Leu-|-Tyr-Trp, in which cleavage of the -Tyr-|-Leu- and -Tyr-|-Trp bonds also occurs).. In terms of biological role, cleaves peptides in various proteins in a process that requires ATP hydrolysis. Has a chymotrypsin-like activity. Plays a major role in the degradation of misfolded proteins. This Bacillus cereus (strain ATCC 10987 / NRS 248) protein is ATP-dependent Clp protease proteolytic subunit 1.